Here is a 606-residue protein sequence, read N- to C-terminus: Membrane protein insertase YidC (606 aa).

The helical transmembrane segment at 8–28 (LILATALSFIVILVWFVLFPP) threads the bilayer. Positions 33 to 59 (MPLTGETSTELTPDAATGSLPSVTSDT) are disordered. The next 6 membrane-spanning stretches (helical) occupy residues 116 to 136 (IVTM…YGWA), 348 to 368 (FIDS…FFLL), 374 to 394 (FIGN…AILL), 448 to 468 (LPIL…FVTI), 506 to 526 (SIMA…SMWL), and 542 to 562 (IFAW…SGLV).

This sequence belongs to the OXA1/ALB3/YidC family. Type 1 subfamily. As to quaternary structure, interacts with the Sec translocase complex via SecD. Specifically interacts with transmembrane segments of nascent integral membrane proteins during membrane integration.

The protein localises to the cell inner membrane. Its function is as follows. Required for the insertion and/or proper folding and/or complex formation of integral membrane proteins into the membrane. Involved in integration of membrane proteins that insert both dependently and independently of the Sec translocase complex, as well as at least some lipoproteins. Aids folding of multispanning membrane proteins. The sequence is that of Membrane protein insertase YidC from Roseobacter denitrificans (strain ATCC 33942 / OCh 114) (Erythrobacter sp. (strain OCh 114)).